The primary structure comprises 228 residues: NOI-like protein (228 aa).

A compositionally biased stretch (basic and acidic residues) spans 56–75 (AQDHQHSEKHHNDTSTDYHV). 2 disordered regions span residues 56-87 (AQDHQHSEKHHNDTSTDYHVVKQHRRKHHRRE) and 99-133 (RPHRSPFQGVDMDSHRSRNHGTSATMSSSVKRNSD). Positions 76–86 (VKQHRRKHHRR) are enriched in basic residues. Residues 118–133 (HGTSATMSSSVKRNSD) are compositionally biased toward polar residues.

This sequence belongs to the RIN4 family.

The chain is NOI-like protein from Elaeis oleifera (American oil palm).